Consider the following 235-residue polypeptide: Cytochrome c oxidase subunit 2 (235 aa).

Residues 1–14 (MPYPMQLGFQDATS) are Mitochondrial intermembrane-facing. Residues 15–45 (PIMEELMYFHDHTLMIVFLISSLVLYIIILM) traverse the membrane as a helical segment. Over 46–59 (LTTKLTHTSTMDAQ) the chain is Mitochondrial matrix. Residues 60 to 87 (EVETIWTILPAVILILIALPSLRILYMM) form a helical membrane-spanning segment. Topologically, residues 88–235 (DEIYNPYLTV…MQSFLSYLYI (148 aa)) are mitochondrial intermembrane. Cu cation contacts are provided by His161, Cys196, Glu198, Cys200, His204, and Met207. Glu198 serves as a coordination point for Mg(2+). Phosphotyrosine is present on Tyr218.

Belongs to the cytochrome c oxidase subunit 2 family. Component of the cytochrome c oxidase (complex IV, CIV), a multisubunit enzyme composed of 14 subunits. The complex is composed of a catalytic core of 3 subunits MT-CO1, MT-CO2 and MT-CO3, encoded in the mitochondrial DNA, and 11 supernumerary subunits COX4I, COX5A, COX5B, COX6A, COX6B, COX6C, COX7A, COX7B, COX7C, COX8 and NDUFA4, which are encoded in the nuclear genome. The complex exists as a monomer or a dimer and forms supercomplexes (SCs) in the inner mitochondrial membrane with NADH-ubiquinone oxidoreductase (complex I, CI) and ubiquinol-cytochrome c oxidoreductase (cytochrome b-c1 complex, complex III, CIII), resulting in different assemblies (supercomplex SCI(1)III(2)IV(1) and megacomplex MCI(2)III(2)IV(2)). Found in a complex with TMEM177, COA6, COX18, COX20, SCO1 and SCO2. Interacts with TMEM177 in a COX20-dependent manner. Interacts with COX20. Interacts with COX16. Requires Cu cation as cofactor.

The protein resides in the mitochondrion inner membrane. The enzyme catalyses 4 Fe(II)-[cytochrome c] + O2 + 8 H(+)(in) = 4 Fe(III)-[cytochrome c] + 2 H2O + 4 H(+)(out). Functionally, component of the cytochrome c oxidase, the last enzyme in the mitochondrial electron transport chain which drives oxidative phosphorylation. The respiratory chain contains 3 multisubunit complexes succinate dehydrogenase (complex II, CII), ubiquinol-cytochrome c oxidoreductase (cytochrome b-c1 complex, complex III, CIII) and cytochrome c oxidase (complex IV, CIV), that cooperate to transfer electrons derived from NADH and succinate to molecular oxygen, creating an electrochemical gradient over the inner membrane that drives transmembrane transport and the ATP synthase. Cytochrome c oxidase is the component of the respiratory chain that catalyzes the reduction of oxygen to water. Electrons originating from reduced cytochrome c in the intermembrane space (IMS) are transferred via the dinuclear copper A center (CU(A)) of subunit 2 and heme A of subunit 1 to the active site in subunit 1, a binuclear center (BNC) formed by heme A3 and copper B (CU(B)). The BNC reduces molecular oxygen to 2 water molecules using 4 electrons from cytochrome c in the IMS and 4 protons from the mitochondrial matrix. The polypeptide is Cytochrome c oxidase subunit 2 (MT-CO2) (Didelphis virginiana (North American opossum)).